A 281-amino-acid chain; its full sequence is Probable endonuclease 4 (281 aa).

9 residues coordinate Zn(2+): His69, His109, Glu145, Asp179, His182, His216, Asp229, His231, and Glu261.

This sequence belongs to the AP endonuclease 2 family. It depends on Zn(2+) as a cofactor.

It catalyses the reaction Endonucleolytic cleavage to 5'-phosphooligonucleotide end-products.. Functionally, endonuclease IV plays a role in DNA repair. It cleaves phosphodiester bonds at apurinic or apyrimidinic (AP) sites, generating a 3'-hydroxyl group and a 5'-terminal sugar phosphate. The polypeptide is Probable endonuclease 4 (Aeromonas hydrophila subsp. hydrophila (strain ATCC 7966 / DSM 30187 / BCRC 13018 / CCUG 14551 / JCM 1027 / KCTC 2358 / NCIMB 9240 / NCTC 8049)).